The sequence spans 211 residues: Agamous-like MADS-box protein AGL12 (211 aa).

Positions 3 to 57 (RGKIQLKRIENPVHRQVTFCKRRTGLLKKAKELSVLCDAEIGVVIFSPQGKLFEL) constitute an MADS-box domain. Residues 95 to 185 (NLDPKDEINV…LEKIEENNNS (91 aa)) enclose the K-box domain.

Preferentially expressed in roots. In root meristem, expressed in external cells of columella, lateral root cap and atrichoblasts. In mature root, expressed in the central cylinder. Expressed in leaf vasculature, young floral meristems and nectaries.

The protein resides in the nucleus. Probable transcription activator that regulates root development by controlling cell proliferation in root meristem. May mediate responses to auxin in the root. May act as promoter of the flowering transition through up-regulation of SOC, FT and LFY. This chain is Agamous-like MADS-box protein AGL12, found in Arabidopsis thaliana (Mouse-ear cress).